The primary structure comprises 208 residues: Redox-sensing transcriptional repressor Rex 1 (208 aa).

The segment at residues 15-54 (SYYMCLERLLDEGVEVVSSEELARRLDLKASQIRKDLSYF) is a DNA-binding region (H-T-H motif). Position 89-94 (89-94 (GAGNIG)) interacts with NAD(+).

Belongs to the transcriptional regulatory Rex family. As to quaternary structure, homodimer.

Its subcellular location is the cytoplasm. In terms of biological role, modulates transcription in response to changes in cellular NADH/NAD(+) redox state. This is Redox-sensing transcriptional repressor Rex 1 from Thermotoga maritima (strain ATCC 43589 / DSM 3109 / JCM 10099 / NBRC 100826 / MSB8).